The chain runs to 416 residues: S-adenosylmethionine synthase (416 aa).

Histidine 16 provides a ligand contact to ATP. Aspartate 18 serves as a coordination point for Mg(2+). Glutamate 44 serves as a coordination point for K(+). Glutamate 57 and glutamine 100 together coordinate L-methionine. Positions 100-110 (QSPDISQGVTA) are flexible loop. ATP is bound by residues 175–177 (DGK), 251–252 (KF), aspartate 260, 266–267 (RK), alanine 283, and lysine 287. Aspartate 260 contributes to the L-methionine binding site. Lysine 291 is a binding site for L-methionine.

Belongs to the AdoMet synthase family. In terms of assembly, homotetramer; dimer of dimers. Mg(2+) is required as a cofactor. Requires K(+) as cofactor.

The protein localises to the cytoplasm. It carries out the reaction L-methionine + ATP + H2O = S-adenosyl-L-methionine + phosphate + diphosphate. The protein operates within amino-acid biosynthesis; S-adenosyl-L-methionine biosynthesis; S-adenosyl-L-methionine from L-methionine: step 1/1. Catalyzes the formation of S-adenosylmethionine (AdoMet) from methionine and ATP. The overall synthetic reaction is composed of two sequential steps, AdoMet formation and the subsequent tripolyphosphate hydrolysis which occurs prior to release of AdoMet from the enzyme. The polypeptide is S-adenosylmethionine synthase (Microcystis aeruginosa (strain NIES-843 / IAM M-2473)).